The primary structure comprises 445 residues: Trigger factor (445 aa).

The PPIase FKBP-type domain occupies 163–248; it reads GDTVVIDYVG…IHEVKVKELP (86 aa). Residues 425–445 are disordered; the sequence is KEVESAKDDADKEASDAKADK.

This sequence belongs to the FKBP-type PPIase family. Tig subfamily.

Its subcellular location is the cytoplasm. It carries out the reaction [protein]-peptidylproline (omega=180) = [protein]-peptidylproline (omega=0). Involved in protein export. Acts as a chaperone by maintaining the newly synthesized protein in an open conformation. Functions as a peptidyl-prolyl cis-trans isomerase. In Lacticaseibacillus casei (strain BL23) (Lactobacillus casei), this protein is Trigger factor.